Reading from the N-terminus, the 140-residue chain is ATP synthase epsilon chain (140 aa).

It belongs to the ATPase epsilon chain family. F-type ATPases have 2 components, CF(1) - the catalytic core - and CF(0) - the membrane proton channel. CF(1) has five subunits: alpha(3), beta(3), gamma(1), delta(1), epsilon(1). CF(0) has three main subunits: a, b and c.

The protein localises to the cell membrane. Functionally, produces ATP from ADP in the presence of a proton gradient across the membrane. The sequence is that of ATP synthase epsilon chain from Dehalococcoides mccartyi (strain ATCC BAA-2100 / JCM 16839 / KCTC 5957 / BAV1).